A 296-amino-acid polypeptide reads, in one-letter code: Glycine--tRNA ligase alpha subunit (296 aa).

Belongs to the class-II aminoacyl-tRNA synthetase family. As to quaternary structure, tetramer of two alpha and two beta subunits.

The protein resides in the cytoplasm. It carries out the reaction tRNA(Gly) + glycine + ATP = glycyl-tRNA(Gly) + AMP + diphosphate. In Parasynechococcus marenigrum (strain WH8102), this protein is Glycine--tRNA ligase alpha subunit.